The sequence spans 109 residues: Trafficking protein particle complex subunit 2-like protein (109 aa).

The protein belongs to the TRAPP small subunits family. Sedlin subfamily. Component of the multisubunit TRAPP (transport protein particle) complex, which includes at least TRAPPC2, TRAPPC2L, TRAPPC3, TRAPPC3L, TRAPPC4, TRAPPC5, TRAPPC8, TRAPPC9, TRAPPC10, TRAPPC11 and TRAPPC12. Interacts with the heterodimer TRAPPC3-TRAPPC6A.

Its subcellular location is the cytoplasm. The protein resides in the perinuclear region. The protein localises to the endoplasmic reticulum. It localises to the golgi apparatus. In terms of biological role, may play a role in vesicular transport from endoplasmic reticulum to Golgi. In Pongo abelii (Sumatran orangutan), this protein is Trafficking protein particle complex subunit 2-like protein (TRAPPC2L).